The sequence spans 261 residues: tRNA pseudouridine synthase A (261 aa).

The Nucleophile role is filled by D51. Y109 contacts substrate.

It belongs to the tRNA pseudouridine synthase TruA family. As to quaternary structure, homodimer.

The catalysed reaction is uridine(38/39/40) in tRNA = pseudouridine(38/39/40) in tRNA. In terms of biological role, formation of pseudouridine at positions 38, 39 and 40 in the anticodon stem and loop of transfer RNAs. This Shewanella baltica (strain OS195) protein is tRNA pseudouridine synthase A.